The sequence spans 628 residues: U-box domain-containing protein 10 (628 aa).

The 75-residue stretch at 242–316 folds into the U-box domain; it reads TIPEDFLCPI…SQWCTKHNIE (75 aa). 5 ARM repeats span residues 373–413, 415–454, 456–495, 497–537, and 539–578; these read TDNR…NLSI, EHNK…SLSL, DENK…NLCI, QGNK…VLAS, and QVAK…CLCK.

It carries out the reaction S-ubiquitinyl-[E2 ubiquitin-conjugating enzyme]-L-cysteine + [acceptor protein]-L-lysine = [E2 ubiquitin-conjugating enzyme]-L-cysteine + N(6)-ubiquitinyl-[acceptor protein]-L-lysine.. It participates in protein modification; protein ubiquitination. Its function is as follows. Functions as an E3 ubiquitin ligase. The sequence is that of U-box domain-containing protein 10 (PUB10) from Arabidopsis thaliana (Mouse-ear cress).